The sequence spans 102 residues: Small ribosomal subunit protein uS10 (102 aa).

It belongs to the universal ribosomal protein uS10 family. In terms of assembly, part of the 30S ribosomal subunit.

Its function is as follows. Involved in the binding of tRNA to the ribosomes. The polypeptide is Small ribosomal subunit protein uS10 (Sulfurisphaera tokodaii (strain DSM 16993 / JCM 10545 / NBRC 100140 / 7) (Sulfolobus tokodaii)).